Reading from the N-terminus, the 302-residue chain is Heme A synthase (302 aa).

The Cytoplasmic segment spans residues 1–8; the sequence is MFSKKNLK. Residues 9–29 form a helical membrane-spanning segment; sequence WLSVLATVIMAFVQLGGALVT. At 30 to 67 the chain is on the extracellular side; that stretch reads KTGSADGCGSDWPLCHGAFLPQNLPIQTLIELSHRAVS. C37 and C44 are oxidised to a cystine. E60 is a catalytic residue. H63 contributes to the heme o binding site. The chain crosses the membrane as a helical span at residues 68-88; sequence GLSLIVVLWLVIVAWKHIGYI. Topologically, residues 89 to 93 are cytoplasmic; that stretch reads KEVKP. A helical transmembrane segment spans residues 94–114; sequence LSCISVGFLLIQALVGAAAVM. At 115-122 the chain is on the extracellular side; that stretch reads WQQNAYVL. The helical transmembrane segment at 123–143 threads the bilayer; sequence ALHFGISLISFSSVFVLTLII. Position 125 (H125) interacts with heme o. The Cytoplasmic segment spans residues 144–161; it reads YEVDRKYEADELFIRKPL. Residues 162–182 form a helical membrane-spanning segment; the sequence is RIYTWIMALIVYMTIYTGALV. Residues 183–215 are Extracellular-facing; that stretch reads RHKEASLAYGQWPLPFNDLMPHNVQDWVNLTHR. H214 is a heme b binding site. The chain crosses the membrane as a helical span at residues 216 to 236; the sequence is GMALIAFIWILITFIHAVNNY. Topologically, residues 237 to 244 are cytoplasmic; it reads RENRTIRY. Residues 245–265 form a helical membrane-spanning segment; that stretch reads GYTAAFILVILQVTTGALSII. Residues 266 to 271 lie on the Extracellular side of the membrane; sequence TEVNLF. Residues 272-292 traverse the membrane as a helical segment; the sequence is IALLHALFITLLFGLIAYFII. H276 is a heme b binding site. Topologically, residues 293–302 are cytoplasmic; that stretch reads LMLRTIRSGG.

It belongs to the COX15/CtaA family. Type 1 subfamily. Interacts with CtaB. Requires heme b as cofactor.

It is found in the cell membrane. The enzyme catalyses Fe(II)-heme o + 2 A + H2O = Fe(II)-heme a + 2 AH2. Its pathway is porphyrin-containing compound metabolism; heme A biosynthesis; heme A from heme O: step 1/1. In terms of biological role, catalyzes the conversion of heme O to heme A by two successive hydroxylations of the methyl group at C8. The first hydroxylation forms heme I, the second hydroxylation results in an unstable dihydroxymethyl group, which spontaneously dehydrates, resulting in the formyl group of heme A. The chain is Heme A synthase from Staphylococcus saprophyticus subsp. saprophyticus (strain ATCC 15305 / DSM 20229 / NCIMB 8711 / NCTC 7292 / S-41).